Reading from the N-terminus, the 374-residue chain is DNA integrity scanning protein DisA (374 aa).

Residues 20–158 (EALMRASLSA…DGERRVLEES (139 aa)) form the DAC domain. Residues Gly-87, Leu-105, and 118–122 (TRHRT) each bind ATP.

This sequence belongs to the DisA family. In terms of assembly, homooctamer. The cofactor is Mg(2+).

It catalyses the reaction 2 ATP = 3',3'-c-di-AMP + 2 diphosphate. Functionally, participates in a DNA-damage check-point that is active prior to asymmetric division when DNA is damaged. DisA forms globular foci that rapidly scan along the chromosomes during sporulation, searching for lesions. When a lesion is present, DisA pauses at the lesion site. This triggers a cellular response that culminates in a temporary block in sporulation initiation. Its function is as follows. Also has diadenylate cyclase activity, catalyzing the condensation of 2 ATP molecules into cyclic di-AMP (c-di-AMP). c-di-AMP acts as a signaling molecule that couples DNA integrity with progression of sporulation. The rise in c-di-AMP level generated by DisA while scanning the chromosome, operates as a positive signal that advances sporulation; upon encountering a lesion, the DisA focus arrests at the damaged site and halts c-di-AMP synthesis. This chain is DNA integrity scanning protein DisA, found in Streptomyces griseus subsp. griseus (strain JCM 4626 / CBS 651.72 / NBRC 13350 / KCC S-0626 / ISP 5235).